The primary structure comprises 267 residues: Hydroxyethylthiazole kinase (267 aa).

M46 provides a ligand contact to substrate. ATP contacts are provided by R121 and T167. A194 is a substrate binding site.

The protein belongs to the Thz kinase family. Requires Mg(2+) as cofactor.

The catalysed reaction is 5-(2-hydroxyethyl)-4-methylthiazole + ATP = 4-methyl-5-(2-phosphooxyethyl)-thiazole + ADP + H(+). It functions in the pathway cofactor biosynthesis; thiamine diphosphate biosynthesis; 4-methyl-5-(2-phosphoethyl)-thiazole from 5-(2-hydroxyethyl)-4-methylthiazole: step 1/1. Functionally, catalyzes the phosphorylation of the hydroxyl group of 4-methyl-5-beta-hydroxyethylthiazole (THZ). In Rhizobium leguminosarum bv. trifolii (strain WSM2304), this protein is Hydroxyethylthiazole kinase.